The chain runs to 175 residues: Endothelin-2 (175 aa).

The first 21 residues, 1-21 (MVSAWCSIALALLLALHEGKG), serve as a signal peptide directing secretion. Residues 22 to 43 (QAAATLEQPASAPKGRGPHLRF) constitute a propeptide that is removed on maturation. Cystine bridges form between Cys-46/Cys-60 and Cys-48/Cys-56. Positions 67–175 (VNTAGQTAPY…IPAYSRWRKR (109 aa)) are excised as a propeptide. The tract at residues 93–108 (CECSTAGDSACATFCH) is endothelin-like.

The protein belongs to the endothelin/sarafotoxin family.

It is found in the secreted. In terms of biological role, vasoconstrictor. The sequence is that of Endothelin-2 (Edn2) from Mus musculus (Mouse).